The chain runs to 541 residues: Solute carrier family 22 member 10 (541 aa).

Residues 1–15 (MAFEELLSQVGGLGR) lie on the Cytoplasmic side of the membrane. Residues 16-36 (FQMLHLVFILPSLMLLIPHIL) traverse the membrane as a helical segment. At 37 to 145 (LENFAAAIPG…DLVCDYQSLK (109 aa)) the chain is on the extracellular side. Asparagine 56 and asparagine 102 each carry an N-linked (GlcNAc...) asparagine glycan. The helical transmembrane segment at 146-166 (SVVQFLLLTGMLVGGIIGGHV) threads the bilayer. The Cytoplasmic portion of the chain corresponds to 167–193 (SDRFGRRFILRWCLLQLAITDTCAAFA). Residues 194–214 (PTFPVYCVLRFLAGFSSMIII) traverse the membrane as a helical segment. The Extracellular portion of the chain corresponds to 215–230 (SNNSLPITEWIRPNSK). Residues 231–251 (ALVVILSSGALSIGQIILGGL) traverse the membrane as a helical segment. The Cytoplasmic segment spans residues 252-259 (AYVFRDWQ). A helical transmembrane segment spans residues 260–280 (TLHVVASVPFFVFFLLSRWLV). At 281-349 (ESARWLIITN…LFRNPSMRKR (69 aa)) the chain is on the extracellular side. Residues 350–370 (ICILVFLRFANTIPFYGTMVN) form a helical membrane-spanning segment. Over 371-377 (LQHVGSN) the chain is Cytoplasmic. The helical transmembrane segment at 378–398 (IFLLQVLYGAVALIVRCLALL) threads the bilayer. At 399-406 (TLNHMGRR) the chain is on the extracellular side. Residues 407 to 427 (ISQILFMFLVGLSILANTFVP) form a helical membrane-spanning segment. The Cytoplasmic portion of the chain corresponds to 428–436 (KEMQTLRVA). The helical transmembrane segment at 437-457 (LACLGIGCSAATFSSVAVHFI) threads the bilayer. The Extracellular portion of the chain corresponds to 458 to 472 (ELIPTVLRARASGID). Residues 473-493 (LTASRIGAALAPLLMTLTVFF) form a helical membrane-spanning segment. Residues 494–495 (TT) are Cytoplasmic-facing. The chain crosses the membrane as a helical span at residues 496–516 (LPWIIYGIFPIIGGLIVFLLP). Over 517-541 (ETKNLPLPDTIKDVENQKKNLKEKA) the chain is Extracellular.

The protein belongs to the major facilitator (TC 2.A.1) superfamily. Organic cation transporter (TC 2.A.1.19) family. Detected in fetal and adult liver, and in adult kidney.

The protein localises to the membrane. The sequence is that of Solute carrier family 22 member 10 (SLC22A10) from Homo sapiens (Human).